A 150-amino-acid chain; its full sequence is Ribosome maturation factor RimP (150 aa).

It belongs to the RimP family.

The protein localises to the cytoplasm. Required for maturation of 30S ribosomal subunits. The sequence is that of Ribosome maturation factor RimP from Salmonella dublin (strain CT_02021853).